A 373-amino-acid chain; its full sequence is Dimethylallyltryptophan synthase CymD (373 aa).

Asp-55, Val-56, and Glu-64 together coordinate L-tryptophan. The Nucleophile role is filled by Glu-64. 5 residues coordinate dimethylallyl diphosphate: Gln-77, Lys-146, Trp-148, Arg-205, and Lys-207. Arg-211 contributes to the L-tryptophan binding site. Tyr-274 is a binding site for dimethylallyl diphosphate. Tyr-326 is an L-tryptophan binding site. Residues Arg-337, Lys-339, and Tyr-341 each coordinate dimethylallyl diphosphate. A FtsK domain is found at 346–373; it reads MHDVTPPPLGVSQQHHLSGQTTARGRTE.

Dimethylallyltryptophan synthase; part of the gene cluster that mediates the biosynthesis of cyclic heptapeptides, known as cyclomarins and also of cyclic dipeptides, called cyclomarazines, which have both antimicrobial and cytotoxic effects. Catalyzes the reverse N-prenylation of monomeric L-tryptophan with dimethylallyl diphosphate (DMAPP) to form N-(1,1-dimethylallyl)-tryptophan (r-N-DMAT). The formation of r-N-DMAT appears to proceed via the deprotonation of the indole nitrogen of tryptophan, which facilitates a nucleophilic attack on the carbocation that is forming on the dimethylallyl group as the diphosphate dissociates. The N-(1,1-dimethylallyl)-tryptophan produced by CymD is combined with a range of standard and nonproteinogenic amino acid substrates to synthesize the peptides, a process that is probably catalyzed by the non-canonical nonribosomal peptide synthetase (NRPS), CymA. Other proteins in the cluster catalyze further modifications of the peptides including CymV which catalyzes the oxidation of olefinic cyclomarins and cyclomarazines to their respective epoxide derivatives. Utilizes only DMAPP as the prenyl donor and has no requirement for divalent cations. This is Dimethylallyltryptophan synthase CymD from Salinispora arenicola (strain CNS-205).